Reading from the N-terminus, the 237-residue chain is Sulfhydrogenase 2 subunit delta (237 aa).

Residues cysteine 11, cysteine 14, cysteine 83, cysteine 132, cysteine 160, cysteine 163, cysteine 170, and cysteine 179 each contribute to the [4Fe-4S] cluster site. The [3Fe-4S] cluster site is built by cysteine 188, cysteine 192, cysteine 199, and cysteine 202.

The protein belongs to the [NiFe]/[NiFeSe] hydrogenase small subunit family. Dimer of heterotetramer of alpha, beta, gamma and delta subunits. The nickel-containing alpha and delta subunits constitute the hydrogenase activity. The beta and gamma subunits (flavin-containing dimer) constitute the sulfur reductase activity. It depends on Ni(2+) as a cofactor. [4Fe-4S] cluster is required as a cofactor. [3Fe-4S] cluster serves as cofactor.

Its subcellular location is the cytoplasm. It carries out the reaction H2 + NADP(+) = NADPH + H(+). It catalyses the reaction H2 + NAD(+) = NADH + H(+). Part of a bifunctional enzyme complex that functions as a hydrogen-evolving hydrogenase with sulfur-reducing activity. May play a role in hydrogen cycling during fermentative growth. Activity exhibited with NAD in addition to NADPH. The alpha and delta subunits form the hydrogenase component that catalyzes the reduction of protons to evolve hydrogen. This Pyrococcus furiosus (strain ATCC 43587 / DSM 3638 / JCM 8422 / Vc1) protein is Sulfhydrogenase 2 subunit delta.